Reading from the N-terminus, the 187-residue chain is Phosphatidylethanolamine-binding protein 1 (187 aa).

Serine 6 and serine 13 each carry phosphoserine. Threonine 42 is subject to Phosphothreonine. Phosphoserine is present on residues serine 52, serine 54, serine 98, and serine 153. An interaction with RAF1 region spans residues 93–134 (KGNDISSGTVLSDYVGSGPPKGTGLHRYVWLVYEQDRPLKCD).

Belongs to the phosphatidylethanolamine-binding protein family. As to quaternary structure, has a tendency to form dimers by disulfide cross-linking. Interacts with RAF1 and this interaction is enhanced if RAF1 is phosphorylated on residues 'Ser-338', 'Ser-339', 'Tyr-340' and 'Tyr-341'. Interacts with ALOX15; in response to IL13/interleukin-13, prevents the interaction of PEBP1 with RAF1 to activate the ERK signaling cascade.

It localises to the cytoplasm. Its function is as follows. Binds ATP, opioids and phosphatidylethanolamine. Has lower affinity for phosphatidylinositol and phosphatidylcholine. Serine protease inhibitor which inhibits thrombin, neuropsin and chymotrypsin but not trypsin, tissue type plasminogen activator and elastase. Inhibits the kinase activity of RAF1 by inhibiting its activation and by dissociating the RAF1/MEK complex and acting as a competitive inhibitor of MEK phosphorylation. Functionally, HCNP may be involved in the function of the presynaptic cholinergic neurons of the central nervous system. HCNP increases the production of choline acetyltransferase but not acetylcholinesterase. Seems to be mediated by a specific receptor. The chain is Phosphatidylethanolamine-binding protein 1 (PEBP1) from Pongo abelii (Sumatran orangutan).